The chain runs to 99 residues: Accessory protein p12I (99 aa).

Residues 3–23 form a helical membrane-spanning segment; the sequence is FRLLSPLSPLALTALLLFLLP. Short sequence motifs (SH3-binding) lie at residues 4–11 and 33–38; these read RLLSPLSP and RPPPAP. The chain crosses the membrane as a helical span at residues 48–68; sequence ILSGLLFLLFLPLFFSLPLLL. 2 consecutive short sequence motifs (SH3-binding) follow at residues 70-77 and 88-93; these read PSLPITMR and KAPSQP. Residue Lys88 forms a Glycyl lysine isopeptide (Lys-Gly) (interchain with G-Cter in ubiquitin); in isolate LAF linkage.

This sequence belongs to the HTLV-1 accessory protein p12I family. In terms of assembly, p12I is a homodimer. Interacts with human CANX, CALR, ATP6V0C, IL2RB, IL2RG. Binds to MHC-I heavy chains HLA-A2, HLA-B7 and HLA-Cw4. Post-translationally, ubiquitinated; a fraction of P12I is degraded via the ubiquitin system.

Its subcellular location is the host endoplasmic reticulum membrane. It is found in the host Golgi apparatus. The protein localises to the host cis-Golgi network membrane. Its function is as follows. p12I is a modulator of T-lymphocyte proliferation and immune function and may contribute to establish a persistent infection. Binds and down-modulates cell surface expression of interleukin-2 receptors IL2RB and IL2RG. Also down-modulates cell surface MHC-I molecules by binding to free immature MHC-I heavy chains in the ER and targeting them to the proteasome for degradation. Binding to IL2RB mediates recruitment of JAK1 and JAK3. As a result of this interaction, p12I increases DNA-binding and transcriptional activity of STAT5. The sequence is that of Accessory protein p12I from Homo sapiens (Human).